The primary structure comprises 457 residues: MERDLSQLWQNCLLQLQDQISSSDFGLWLRPLQADTSMPNTIVLYASNMFVKSWVENNYLAQITKIAQDLSNNTDLVIKVQEGSKPAARKVVAQQEIANTPVQHSAPMPENEPQAAFRSNLNQHHLFENFVEGKSNQLARAVGQKVANRPGDKSANPLFLYGGTGLGKTHLLHAVGNGIIAGNSNARVVYIHAERFVQEYVKALKAERIENFKKFYRSLDALLIDDIQFFAGKDGTQEEFFNTFNSLFEGEKQIILTSDRYPREIEKIDDRLKSRFSWGLSIAIEPPDLETRVAILMKKAEEKNIYLPEEVAFFIGQKLRTNVRELEGALNRVHANADFTGKAITIDFVRETLKDMLALQDKLVTVENIQKMVAEYYRIKVSDLKSKNRSRSIARPRQLAMALAKELTNRSLPEIGKAFGDRDHTTVLHACRTIAALRDDDNNIQEDWSNLIRTLSA.

The segment at 1 to 81 (MERDLSQLWQ…NNTDLVIKVQ (81 aa)) is domain I, interacts with DnaA modulators. Residues 81 to 119 (QEGSKPAARKVVAQQEIANTPVQHSAPMPENEPQAAFRS) are domain II. Residues 120-337 (NLNQHHLFEN…GALNRVHANA (218 aa)) form a domain III, AAA+ region region. Positions 165, 167, 168, and 169 each coordinate ATP. The tract at residues 338 to 457 (DFTGKAITID…WSNLIRTLSA (120 aa)) is domain IV, binds dsDNA.

This sequence belongs to the DnaA family. Oligomerizes as a right-handed, spiral filament on DNA at oriC.

The protein localises to the cytoplasm. In terms of biological role, plays an essential role in the initiation and regulation of chromosomal replication. ATP-DnaA binds to the origin of replication (oriC) to initiate formation of the DNA replication initiation complex once per cell cycle. Binds the DnaA box (a 9 base pair repeat at the origin) and separates the double-stranded (ds)DNA. Forms a right-handed helical filament on oriC DNA; dsDNA binds to the exterior of the filament while single-stranded (ss)DNA is stabiized in the filament's interior. The ATP-DnaA-oriC complex binds and stabilizes one strand of the AT-rich DNA unwinding element (DUE), permitting loading of DNA polymerase. After initiation quickly degrades to an ADP-DnaA complex that is not apt for DNA replication. Binds acidic phospholipids. The polypeptide is Chromosomal replication initiator protein DnaA (Mannheimia succiniciproducens (strain KCTC 0769BP / MBEL55E)).